The primary structure comprises 522 residues: Protein nucleotidyltransferase YdiU (522 aa).

ATP-binding residues include Gly-109, Gly-111, Arg-112, Lys-132, Asp-144, Gly-145, Arg-195, and Arg-202. The Proton acceptor role is filled by Asp-271. Mg(2+) is bound by residues Asn-272 and Asp-281. Residue Asp-281 coordinates ATP.

It belongs to the SELO family. It depends on Mg(2+) as a cofactor. The cofactor is Mn(2+).

The catalysed reaction is L-seryl-[protein] + ATP = 3-O-(5'-adenylyl)-L-seryl-[protein] + diphosphate. The enzyme catalyses L-threonyl-[protein] + ATP = 3-O-(5'-adenylyl)-L-threonyl-[protein] + diphosphate. It carries out the reaction L-tyrosyl-[protein] + ATP = O-(5'-adenylyl)-L-tyrosyl-[protein] + diphosphate. It catalyses the reaction L-histidyl-[protein] + UTP = N(tele)-(5'-uridylyl)-L-histidyl-[protein] + diphosphate. The catalysed reaction is L-seryl-[protein] + UTP = O-(5'-uridylyl)-L-seryl-[protein] + diphosphate. The enzyme catalyses L-tyrosyl-[protein] + UTP = O-(5'-uridylyl)-L-tyrosyl-[protein] + diphosphate. In terms of biological role, nucleotidyltransferase involved in the post-translational modification of proteins. It can catalyze the addition of adenosine monophosphate (AMP) or uridine monophosphate (UMP) to a protein, resulting in modifications known as AMPylation and UMPylation. This Burkholderia multivorans (strain ATCC 17616 / 249) protein is Protein nucleotidyltransferase YdiU.